Consider the following 238-residue polypeptide: Ribonuclease PH (238 aa).

Phosphate is bound by residues R86 and 124-126 (GTR).

The protein belongs to the RNase PH family. Homohexameric ring arranged as a trimer of dimers.

The catalysed reaction is tRNA(n+1) + phosphate = tRNA(n) + a ribonucleoside 5'-diphosphate. Phosphorolytic 3'-5' exoribonuclease that plays an important role in tRNA 3'-end maturation. Removes nucleotide residues following the 3'-CCA terminus of tRNAs; can also add nucleotides to the ends of RNA molecules by using nucleoside diphosphates as substrates, but this may not be physiologically important. Probably plays a role in initiation of 16S rRNA degradation (leading to ribosome degradation) during starvation. The chain is Ribonuclease PH from Salmonella choleraesuis (strain SC-B67).